A 224-amino-acid polypeptide reads, in one-letter code: tRNA (guanine-N(7)-)-methyltransferase (224 aa).

Glu54, Glu79, Glu106, and Asp129 together coordinate S-adenosyl-L-methionine. Asp129 is a catalytic residue. The substrate site is built by Lys133 and Asp165.

This sequence belongs to the class I-like SAM-binding methyltransferase superfamily. TrmB family.

The enzyme catalyses guanosine(46) in tRNA + S-adenosyl-L-methionine = N(7)-methylguanosine(46) in tRNA + S-adenosyl-L-homocysteine. Its pathway is tRNA modification; N(7)-methylguanine-tRNA biosynthesis. Its function is as follows. Catalyzes the formation of N(7)-methylguanine at position 46 (m7G46) in tRNA. The polypeptide is tRNA (guanine-N(7)-)-methyltransferase (Chlamydia abortus (strain DSM 27085 / S26/3) (Chlamydophila abortus)).